The sequence spans 571 residues: Sulfite reductase [NADPH] hemoprotein beta-component (571 aa).

[4Fe-4S] cluster-binding residues include Cys-436, Cys-442, Cys-481, and Cys-485. Position 485 (Cys-485) interacts with siroheme.

The protein belongs to the nitrite and sulfite reductase 4Fe-4S domain family. In terms of assembly, alpha(8)-beta(8). The alpha component is a flavoprotein, the beta component is a hemoprotein. Siroheme is required as a cofactor. The cofactor is [4Fe-4S] cluster.

It carries out the reaction hydrogen sulfide + 3 NADP(+) + 3 H2O = sulfite + 3 NADPH + 4 H(+). It functions in the pathway sulfur metabolism; hydrogen sulfide biosynthesis; hydrogen sulfide from sulfite (NADPH route): step 1/1. Component of the sulfite reductase complex that catalyzes the 6-electron reduction of sulfite to sulfide. This is one of several activities required for the biosynthesis of L-cysteine from sulfate. This Bacillus velezensis (strain DSM 23117 / BGSC 10A6 / LMG 26770 / FZB42) (Bacillus amyloliquefaciens subsp. plantarum) protein is Sulfite reductase [NADPH] hemoprotein beta-component.